A 362-amino-acid chain; its full sequence is Probable dual-specificity RNA methyltransferase RlmN (362 aa).

E105 functions as the Proton acceptor in the catalytic mechanism. A Radical SAM core domain is found at 111 to 344; sequence HEYGNSICVT…VTIRREQGHD (234 aa). C118 and C349 are oxidised to a cystine. Positions 125, 129, and 132 each coordinate [4Fe-4S] cluster. S-adenosyl-L-methionine is bound by residues 175 to 176, S207, 230 to 232, and N306; these read GE and SLH. The S-methylcysteine intermediate role is filled by C349.

Belongs to the radical SAM superfamily. RlmN family. [4Fe-4S] cluster serves as cofactor.

Its subcellular location is the cytoplasm. The enzyme catalyses adenosine(2503) in 23S rRNA + 2 reduced [2Fe-2S]-[ferredoxin] + 2 S-adenosyl-L-methionine = 2-methyladenosine(2503) in 23S rRNA + 5'-deoxyadenosine + L-methionine + 2 oxidized [2Fe-2S]-[ferredoxin] + S-adenosyl-L-homocysteine. It carries out the reaction adenosine(37) in tRNA + 2 reduced [2Fe-2S]-[ferredoxin] + 2 S-adenosyl-L-methionine = 2-methyladenosine(37) in tRNA + 5'-deoxyadenosine + L-methionine + 2 oxidized [2Fe-2S]-[ferredoxin] + S-adenosyl-L-homocysteine. In terms of biological role, specifically methylates position 2 of adenine 2503 in 23S rRNA and position 2 of adenine 37 in tRNAs. The polypeptide is Probable dual-specificity RNA methyltransferase RlmN (Bacillus thuringiensis subsp. konkukian (strain 97-27)).